Reading from the N-terminus, the 355-residue chain is Phosphoribosylformylglycinamidine cyclo-ligase (355 aa).

It belongs to the AIR synthase family.

The protein resides in the cytoplasm. It catalyses the reaction 2-formamido-N(1)-(5-O-phospho-beta-D-ribosyl)acetamidine + ATP = 5-amino-1-(5-phospho-beta-D-ribosyl)imidazole + ADP + phosphate + H(+). The protein operates within purine metabolism; IMP biosynthesis via de novo pathway; 5-amino-1-(5-phospho-D-ribosyl)imidazole from N(2)-formyl-N(1)-(5-phospho-D-ribosyl)glycinamide: step 2/2. In Methylobacterium sp. (strain 4-46), this protein is Phosphoribosylformylglycinamidine cyclo-ligase.